The following is a 350-amino-acid chain: MAMRQTPLTCSGHTRPVVDLAFSGVTPYGYFLISACKDGKPMLRQGDTGDWIGTFLGHKGAVWGATLNKDATKAATAAADFTAKVWDAVSGDELITLAHKHIVKSVDFTQDSNYLLTGGQDKLLRIYDLSKPEAEPDVVSGHTSGIKKALWSSDDKQILSADDKTVRLWDRSTMTEVKALNVAMSVSSMEYVPEGQILVITYGKTIAFHSAETLEQIKSFEAPATINSASLHPEKECLVAGGEDFKLYKYDYNTGEELESYKGHFGPIHCVRFSPDGELYASGSEDGTLRLWQTTVGKTYGLWKCVVPEEENAEAAKARTTLPGTAEEEIEEVASENSDSVYSSTPEVKA.

WD repeat units follow at residues 12 to 56, 57 to 96, 98 to 137, 141 to 179, 180 to 212, 221 to 262, and 263 to 302; these read GHTR…GTFL, GHKGAVWGATLNKDATKAATAAADFTAKVWDAVSGDELIT, AHKHIVKSVDFTQDSNYLLTGGQDKLLRIYDLSKPEAEPD, GHTSGIKKALWSSDDKQILSADDKTVRLWDRSTMTEVKA, LNVAMSVSSMEYVPEGQILVITYGKTIAFHSAE, EAPA…ESYK, and GHFGPIHCVRFSPDGELYASGSEDGTLRLWQTTVGKTYGL. A disordered region spans residues 311–350; it reads ENAEAAKARTTLPGTAEEEIEEVASENSDSVYSSTPEVKA. Over residues 335–350 the composition is skewed to polar residues; the sequence is SENSDSVYSSTPEVKA.

The protein belongs to the WD repeat STRAP family. In terms of assembly, part of the core SMN complex.

It localises to the cytoplasm. The protein localises to the nucleus. Functionally, the SMN complex catalyzes the assembly of small nuclear ribonucleoproteins (snRNPs), the building blocks of the spliceosome, and thereby plays an important role in the splicing of cellular pre-mRNAs. Most spliceosomal snRNPs contain a common set of Sm proteins SNRPB, SNRPD1, SNRPD2, SNRPD3, SNRPE, SNRPF and SNRPG that assemble in a heptameric protein ring on the Sm site of the small nuclear RNA to form the core snRNP (Sm core). In the cytosol, the Sm proteins SNRPD1, SNRPD2, SNRPE, SNRPF and SNRPG are trapped in an inactive 6S pICln-Sm complex by the chaperone CLNS1A that controls the assembly of the core snRNP. To assemble core snRNPs, the SMN complex accepts the trapped 5Sm proteins from CLNS1A forming an intermediate. Binding of snRNA inside 5Sm triggers eviction of the SMN complex, thereby allowing binding of SNRPD3 and SNRPB to complete assembly of the core snRNP. STRAP plays a role in the cellular distribution of the SMN complex. This is Serine-threonine kinase receptor-associated protein (STRAP) from Gallus gallus (Chicken).